A 333-amino-acid chain; its full sequence is MTVDTAPQSHYQETKVSEIPIVILKSSATDDVAAHEAIEALKVAGVCIVRNLLDRSTVDKVRQELQPYDKQADSFEGFPKNYCQVAGLLSKSPTYAHSIVGNKLFTAVRNYFLTSTYECWAEKGTWMSVKSPPQLDSTLALYVNPGSGDQGLHRDDATQQNWNSGASEYSLGRDSGCAMMVALTECAREDGTTRFIPGSHLWDYQYDHPSNDDPRIRYAEMRPGDAYLMLSSVIHAGSVNYSTDRRRVLAAVFAARSHLRQVENQYLTYDIETVRTFPTWLQRFMGYSLSKLFQGWVDKKDPLLVVDPNAQPEGEDDGGMKPNEGEHVVEAQI.

Positions 153, 155, and 235 each coordinate Fe cation. A disordered region spans residues 309-333 (NAQPEGEDDGGMKPNEGEHVVEAQI). The segment covering 323–333 (NEGEHVVEAQI) has biased composition (basic and acidic residues).

The protein belongs to the PhyH family. In terms of assembly, homodimer. Requires Fe cation as cofactor.

It functions in the pathway alkaloid biosynthesis. Its function is as follows. Dioxygenase; part of the gene cluster that mediates the biosynthesis of communesins, a prominent class of indole alkaloids with great potential as pharmaceuticals. Communesins are biosynthesized by the coupling of tryptamine and aurantioclavine, two building blocks derived from L-tryptophan. The L-tryptophan decarboxylase cnsB converts L-tryptophan to tryptamine, whereas the tryptophan dimethylallyltransferase cnsF converts L-tryptophan to 4-dimethylallyl tryptophan which is further transformed to aurantioclavine by the aurantioclavine synthase cnsA, probably aided by the catalase cnsD. The cytochrome P450 monooxygenase cnsC catalyzes the heterodimeric coupling between the two different indole moieties, tryptamine and aurantioclavine, to construct vicinal quaternary stereocenters and yield the heptacyclic communesin scaffold. The O-methyltransferase cnsE then methylates the communesin scaffold to produce communesin K, the simplest characterized communesin that contains the heptacyclic core. The dioxygenase cnsJ converts communesin K into communesin I. Acylation to introduce the hexadienyl group at position N16 of communesin I by the acyltransferase cnsK leads to the production of communesin B. The hexadienyl group is produced by the highly reducing polyketide synthase cnsI, before being hydrolytically removed from cnsI by the serine hydrolase cnsH, converted into hexadienyl-CoA by the CoA ligase cnsG, and then transferred to communesin I by cnsK. Surprisingly, cnsK may also be a promiscuous acyltransferase that can tolerate a range of acyl groups, including acetyl-, propionyl-, and butyryl-CoA, which lead to communesins A, G and H respectively. The roles of the alpha-ketoglutarate-dependent dioxygenases cnsM and cnsP have still to be determined. In Penicillium expansum (Blue mold rot fungus), this protein is Dioxygenase cnsJ.